The following is a 311-amino-acid chain: Metal-staphylopine import system permease protein CntB (311 aa).

Transmembrane regions (helical) follow at residues 9–29 (IALMFPLMIVVSFMTFLLTYI), 105–125 (LTIISSVMVMITSIILGVVSA), 139–159 (VAFFLTALPSYWIASILIIYV), 173–193 (GPESYILPVIVITIAYAGIYF), 237–257 (IFCMSIPMIMGGLVVIEYIFA), and 274–294 (FPVIQAYVLIVAVLFIVFNTL). Positions 99-295 (FMNTLKLTII…VLFIVFNTLA (197 aa)) constitute an ABC transmembrane type-1 domain.

This sequence belongs to the binding-protein-dependent transport system permease family. As to quaternary structure, the complex is composed of two ATP-binding proteins (CntD and CntF), two transmembrane proteins (CntB and CntC) and a solute-binding protein (CntA).

It is found in the cell membrane. With respect to regulation, nickel/cobalt import is reduced in the presence of zinc. Part of the ABC transporter complex CntABCDF (Opp1) involved in the uptake of metal in complex with the metallophore staphylopine (StP). Involved in the import of divalent metals ions such as nickel, cobalt and zinc. Probably responsible for the translocation of the substrate across the membrane. Plays a major role in nickel/cobalt import in zinc-depleted conditions. Contributes to virulence. Required for full urease activity in vitro. In Staphylococcus aureus (strain NCTC 8325 / PS 47), this protein is Metal-staphylopine import system permease protein CntB.